We begin with the raw amino-acid sequence, 394 residues long: Probable purine permease 23 (394 aa).

Basic and acidic residues predominate over residues 1-20 (MEMTEASKHTTTHEESEHVQ). The tract at residues 1–24 (MEMTEASKHTTTHEESEHVQNPEP) is disordered. S29 carries the phosphoserine modification. 10 helical membrane passes run 43–63 (ISVL…ILLL), 85–105 (WMQA…FFIF), 124–144 (LILL…LYAL), 152–172 (GFFM…TAII), 180–200 (WIII…PVFS), 211–231 (GIQA…LCLV), 254–274 (VLEM…VGLF), 301–321 (VGLA…VLYV), 328–348 (IVHM…FDFI), and 352–372 (FSWP…SYFY).

The protein belongs to the purine permeases (TC 2.A.7.14) family.

It localises to the membrane. This Arabidopsis thaliana (Mouse-ear cress) protein is Probable purine permease 23 (PUP23).